A 382-amino-acid polypeptide reads, in one-letter code: V-type proton ATPase subunit C 1 (382 aa).

Threonine 2 is modified (N-acetylthreonine).

The protein belongs to the V-ATPase C subunit family. In terms of assembly, V-ATPase is a heteromultimeric enzyme made up of two complexes: the ATP-hydrolytic V1 complex and the proton translocation V0 complex. The V1 complex consists of three catalytic AB heterodimers that form a heterohexamer, three peripheral stalks each consisting of EG heterodimers, one central rotor including subunits D and F, and the regulatory subunits C and H. The proton translocation complex V0 consists of the proton transport subunit a, a ring of proteolipid subunits c9c'', rotary subunit d, subunits e and f, and two accessory subunits.

Functionally, subunit of the V1 complex of vacuolar(H+)-ATPase (V-ATPase), a multisubunit enzyme composed of a peripheral complex (V1) that hydrolyzes ATP and a membrane integral complex (V0) that translocates protons. V-ATPase is responsible for acidifying and maintaining the pH of intracellular compartments and in some cell types, is targeted to the plasma membrane, where it is responsible for acidifying the extracellular environment. Subunit C is necessary for the assembly of the catalytic sector of the enzyme and is likely to have a specific function in its catalytic activity. This chain is V-type proton ATPase subunit C 1 (atp6v1c1), found in Xenopus laevis (African clawed frog).